A 304-amino-acid polypeptide reads, in one-letter code: MNKTHFNHISVLKQEAIDFLKIKPEGIYVDATLGQCGHTIEIANLLQQGFLYSFDQDVEACTNAKKILPPHLPIEIIHSNFSHLKTQLAQRNVFQLDGILFDLGLSSCQIDNPQRGFSYLHNTPLDMRMNVNQTITAQYILNNYSFAQLKNIFKVYGEVKNAALVASEIIKQRPLCTSYDLVAITDRFCNRQKGHSAKKIFQALRIEVNQELESLKQALEQSLDLLKPNAMIVVISFHSLEDRIVKHFFKKNSTFVLPKKMPITIMPQTPLSIITKKAFLPSEEEMQNNSRSISAKLRVAVKNG.

S-adenosyl-L-methionine contacts are provided by residues 36–38 (CGH), Asp55, Phe81, Asp102, and Gln109.

It belongs to the methyltransferase superfamily. RsmH family.

Its subcellular location is the cytoplasm. It catalyses the reaction cytidine(1402) in 16S rRNA + S-adenosyl-L-methionine = N(4)-methylcytidine(1402) in 16S rRNA + S-adenosyl-L-homocysteine + H(+). Its function is as follows. Specifically methylates the N4 position of cytidine in position 1402 (C1402) of 16S rRNA. In Onion yellows phytoplasma (strain OY-M), this protein is Ribosomal RNA small subunit methyltransferase H.